Here is a 301-residue protein sequence, read N- to C-terminus: Protoheme IX farnesyltransferase 1 (301 aa).

9 consecutive transmembrane segments (helical) span residues 29 to 49 (VVAL…PHAV), 51 to 71 (VQPL…AAAL), 101 to 121 (ALIF…SLVN), 123 to 143 (LTAW…TAYL), 150 to 170 (NIVI…TAVT), 177 to 197 (ALLL…ALAI), 223 to 243 (CILL…LVGM), 244 to 264 (CGPV…YKAW), and 275 to 295 (AMQV…ALLL).

It belongs to the UbiA prenyltransferase family. Protoheme IX farnesyltransferase subfamily.

The protein localises to the cell inner membrane. The enzyme catalyses heme b + (2E,6E)-farnesyl diphosphate + H2O = Fe(II)-heme o + diphosphate. The protein operates within porphyrin-containing compound metabolism; heme O biosynthesis; heme O from protoheme: step 1/1. Its function is as follows. Converts heme B (protoheme IX) to heme O by substitution of the vinyl group on carbon 2 of heme B porphyrin ring with a hydroxyethyl farnesyl side group. In Shewanella baltica (strain OS185), this protein is Protoheme IX farnesyltransferase 1.